We begin with the raw amino-acid sequence, 259 residues long: Flagellar L-ring protein (259 aa).

Positions 1–15 (MKRISLIALVTLMSG) are cleaved as a signal peptide. The N-palmitoyl cysteine moiety is linked to residue Cys16. Cys16 carries S-diacylglycerol cysteine lipidation.

It belongs to the FlgH family. In terms of assembly, the basal body constitutes a major portion of the flagellar organelle and consists of four rings (L,P,S, and M) mounted on a central rod.

The protein localises to the cell outer membrane. It is found in the bacterial flagellum basal body. Its function is as follows. Assembles around the rod to form the L-ring and probably protects the motor/basal body from shearing forces during rotation. In Vibrio vulnificus (strain YJ016), this protein is Flagellar L-ring protein.